We begin with the raw amino-acid sequence, 428 residues long: 2-isopropylmalate synthase 2 (428 aa).

The region spanning 40–302 is the Pyruvate carboxyltransferase domain; it reads PFFMDVTLRD…EVPLNFSTIY (263 aa). Mn(2+)-binding residues include Asp-49, His-241, His-243, and Asn-277.

The protein belongs to the alpha-IPM synthase/homocitrate synthase family. LeuA type 1 subfamily. As to quaternary structure, homodimer. Requires Mn(2+) as cofactor.

Its subcellular location is the cytoplasm. The catalysed reaction is 3-methyl-2-oxobutanoate + acetyl-CoA + H2O = (2S)-2-isopropylmalate + CoA + H(+). Its pathway is amino-acid biosynthesis; L-leucine biosynthesis; L-leucine from 3-methyl-2-oxobutanoate: step 1/4. In terms of biological role, catalyzes the condensation of the acetyl group of acetyl-CoA with 3-methyl-2-oxobutanoate (2-ketoisovalerate) to form 3-carboxy-3-hydroxy-4-methylpentanoate (2-isopropylmalate). Has high alpha-isopropylmalate synthase activity and low citramalate synthase activity. This chain is 2-isopropylmalate synthase 2, found in Leptospira interrogans serogroup Icterohaemorrhagiae serovar Lai (strain 56601).